The sequence spans 455 residues: UDP-N-acetylmuramoylalanine--D-glutamate ligase (455 aa).

118-124 is an ATP binding site; it reads GSNAKST.

The protein belongs to the MurCDEF family.

The protein localises to the cytoplasm. The catalysed reaction is UDP-N-acetyl-alpha-D-muramoyl-L-alanine + D-glutamate + ATP = UDP-N-acetyl-alpha-D-muramoyl-L-alanyl-D-glutamate + ADP + phosphate + H(+). It functions in the pathway cell wall biogenesis; peptidoglycan biosynthesis. In terms of biological role, cell wall formation. Catalyzes the addition of glutamate to the nucleotide precursor UDP-N-acetylmuramoyl-L-alanine (UMA). This chain is UDP-N-acetylmuramoylalanine--D-glutamate ligase, found in Chromohalobacter salexigens (strain ATCC BAA-138 / DSM 3043 / CIP 106854 / NCIMB 13768 / 1H11).